We begin with the raw amino-acid sequence, 162 residues long: SsrA-binding protein (162 aa).

A compositionally biased stretch (basic and acidic residues) spans 137-154 (HDKREDTKAREWDREKAR). Positions 137–162 (HDKREDTKAREWDREKARIMKNKHRG) are disordered.

Belongs to the SmpB family.

It localises to the cytoplasm. Its function is as follows. Required for rescue of stalled ribosomes mediated by trans-translation. Binds to transfer-messenger RNA (tmRNA), required for stable association of tmRNA with ribosomes. tmRNA and SmpB together mimic tRNA shape, replacing the anticodon stem-loop with SmpB. tmRNA is encoded by the ssrA gene; the 2 termini fold to resemble tRNA(Ala) and it encodes a 'tag peptide', a short internal open reading frame. During trans-translation Ala-aminoacylated tmRNA acts like a tRNA, entering the A-site of stalled ribosomes, displacing the stalled mRNA. The ribosome then switches to translate the ORF on the tmRNA; the nascent peptide is terminated with the 'tag peptide' encoded by the tmRNA and targeted for degradation. The ribosome is freed to recommence translation, which seems to be the essential function of trans-translation. This chain is SsrA-binding protein, found in Aeromonas salmonicida (strain A449).